A 257-amino-acid chain; its full sequence is Photosystem I chlorophyll a/b-binding protein 2, chloroplastic (257 aa).

The transit peptide at 1-43 directs the protein to the chloroplast; it reads MASSLCASSAIAAISSPSFLGGKKLRLKKKLTVPAVSRPDASV. W55 contacts chlorophyll b. Residues F75, S81, and E94 each coordinate chlorophyll a. R99 is a chlorophyll b binding site. 2 consecutive transmembrane segments (helical) span residues 100 to 120 and 133 to 153; these read WAML…IGIL and YFTD…WAEG. Positions 152 and 155 each coordinate chlorophyll b. Positions 208, 209, 212, 214, 226, and 241 each coordinate chlorophyll a. A helical membrane pass occupies residues 215 to 235; it reads LAMLAVMGAWFQHIYTGTGPI.

It belongs to the light-harvesting chlorophyll a/b-binding (LHC) protein family. The LHC complex consists of chlorophyll a-b binding proteins. Red-emitting heterodimers with LHCA3 and LHCA5. Binds to carotenoids. The cofactor is Binds at least 14 chlorophylls (8 Chl-a and 6 Chl-b) and carotenoids such as lutein and neoxanthin.. Post-translationally, photoregulated by reversible phosphorylation of its threonine residues.

It is found in the plastid. Its subcellular location is the chloroplast thylakoid membrane. Its function is as follows. The light-harvesting complex (LHC) functions as a light receptor, it captures and delivers excitation energy to photosystems with which it is closely associated, here photosystem I. This is Photosystem I chlorophyll a/b-binding protein 2, chloroplastic from Arabidopsis thaliana (Mouse-ear cress).